The primary structure comprises 324 residues: MFNFANFYQLLAQDTVLQPWLNTLPQQLTDWQNAEHGDIERWIKALKKIPEGCADNIDLKSSVTLSNNTPLIDGERKKLENLLQTFHPWRKGPFTVHDIHIDTEWRSDWKWDRLLPHITPLKNRSVLDVGCGNGYHMWRMLGEEARLCVGIDPSHLFLIQFEAIRKLMGNDQRAHLLPLGIEQLPELNAFDTVFSMGVLYHRRSPLDHLIQLKNQLVAGGELVLETLVIDGDENAVLMPVDRYAQMRNVYFFPSARALKVWLESVGFVDVKIVDECVTTTGEQRSTEWMKHNSLPEYLDPNDSTKTIEGHPAPKRAILIAKKPD.

Carboxy-S-adenosyl-L-methionine contacts are provided by residues Lys-91, Trp-105, Lys-110, Gly-130, Asp-152 to Ser-154, Ile-181 to Glu-182, Met-196, Tyr-200, and Arg-315.

This sequence belongs to the class I-like SAM-binding methyltransferase superfamily. CmoB family. In terms of assembly, homotetramer.

The catalysed reaction is carboxy-S-adenosyl-L-methionine + 5-hydroxyuridine(34) in tRNA = 5-carboxymethoxyuridine(34) in tRNA + S-adenosyl-L-homocysteine + H(+). Functionally, catalyzes carboxymethyl transfer from carboxy-S-adenosyl-L-methionine (Cx-SAM) to 5-hydroxyuridine (ho5U) to form 5-carboxymethoxyuridine (cmo5U) at position 34 in tRNAs. This Aliivibrio fischeri (strain MJ11) (Vibrio fischeri) protein is tRNA U34 carboxymethyltransferase.